The sequence spans 186 residues: Ribosome-recycling factor (186 aa).

The protein belongs to the RRF family.

It localises to the cytoplasm. Functionally, responsible for the release of ribosomes from messenger RNA at the termination of protein biosynthesis. May increase the efficiency of translation by recycling ribosomes from one round of translation to another. The chain is Ribosome-recycling factor from Cytophaga hutchinsonii (strain ATCC 33406 / DSM 1761 / CIP 103989 / NBRC 15051 / NCIMB 9469 / D465).